The sequence spans 827 residues: Carnosine synthase 1 (827 aa).

Residues 516 to 720 (GPPWPSTSLH…LLLASTMVAC (205 aa)) form the ATP-grasp domain. Residue 542–611 (IYQVPLPGVM…MEFVEGTEHD (70 aa)) participates in ATP binding. Residues E677, E689, and N691 each contribute to the Mg(2+) site. Mn(2+) contacts are provided by E677, E689, and N691.

Homotetramer. Mg(2+) is required as a cofactor. Requires Mn(2+) as cofactor.

The catalysed reaction is beta-alanine + L-histidine + ATP = carnosine + ADP + phosphate + H(+). It catalyses the reaction 4-aminobutanoate + L-histidine + ATP = L-homocarnosine + ADP + phosphate + H(+). Functionally, catalyzes the synthesis of carnosine and homocarnosine. Carnosine is synthesized more efficiently than homocarnosine. In Mus musculus (Mouse), this protein is Carnosine synthase 1.